The primary structure comprises 755 residues: DNA ligase 1 (755 aa).

A mitochondrion-targeting transit peptide spans 1–44 (MRRLLTGCLLSSARPLKSRLPLLMSSSLPSSAGKKPKQATLARF). The residue at position 2 (Arg2) is an N-acetylserine. Polar residues predominate over residues 47 to 60 (SMKNKPTEGTPSPK). 2 disordered regions span residues 47–79 (SMKN…GEEE) and 97–127 (PSSM…QRLV). A phosphoserine mark is found at Ser58 and Ser75. A compositionally biased stretch (low complexity) spans 102–114 (SNFSSIPSSAPSS). Phosphoserine is present on residues Ser119 and Ser123. Residues 309-318 (KLRIGLAEKT) form an interaction with target DNA region. Glu417 is a binding site for ATP. Lys419 acts as the N6-AMP-lysine intermediate in catalysis. Positions 424 and 440 each coordinate ATP. Glu472 lines the Mg(2+) pocket. The interaction with target DNA stretch occupies residues 493–495 (KRK). Mg(2+) is bound at residue Glu571. ATP contacts are provided by Lys576, Arg590, and Lys596.

It belongs to the ATP-dependent DNA ligase family. The cofactor is Mg(2+).

It is found in the mitochondrion. The protein resides in the nucleus. The enzyme catalyses ATP + (deoxyribonucleotide)n-3'-hydroxyl + 5'-phospho-(deoxyribonucleotide)m = (deoxyribonucleotide)n+m + AMP + diphosphate.. In terms of biological role, DNA ligase that seals nicks in double-stranded DNA during DNA replication, DNA recombination and DNA repair. The mitochondrial form is required for mitochondrial DNA maintenance but is non-essential while the nuclear form is essential for cell viability. This Saccharomyces cerevisiae (strain ATCC 204508 / S288c) (Baker's yeast) protein is DNA ligase 1 (CDC9).